Reading from the N-terminus, the 187-residue chain is Ribosome-recycling factor (187 aa).

It belongs to the RRF family.

The protein localises to the cytoplasm. Responsible for the release of ribosomes from messenger RNA at the termination of protein biosynthesis. May increase the efficiency of translation by recycling ribosomes from one round of translation to another. In Ligilactobacillus salivarius (strain UCC118) (Lactobacillus salivarius), this protein is Ribosome-recycling factor.